The chain runs to 274 residues: Phosphate import ATP-binding protein PstB (274 aa).

Residues 28-269 (VTVRDLNFYY…PNDRRTQDYI (242 aa)) form the ABC transporter domain. 60–67 (GPSGCGKS) is an ATP binding site.

This sequence belongs to the ABC transporter superfamily. Phosphate importer (TC 3.A.1.7) family. The complex is composed of two ATP-binding proteins (PstB), two transmembrane proteins (PstC and PstA) and a solute-binding protein (PstS).

It is found in the cell inner membrane. It carries out the reaction phosphate(out) + ATP + H2O = ADP + 2 phosphate(in) + H(+). Its function is as follows. Part of the ABC transporter complex PstSACB involved in phosphate import. Responsible for energy coupling to the transport system. The polypeptide is Phosphate import ATP-binding protein PstB (Rhodopseudomonas palustris (strain HaA2)).